The chain runs to 317 residues: Melanocyte-stimulating hormone receptor (317 aa).

Residues 1-37 lie on the Extracellular side of the membrane; the sequence is MSVQGPQRRLLGSVNSTSPAAPRLGLAANQTGPRCLE. Asparagine 15 and asparagine 29 each carry an N-linked (GlcNAc...) asparagine glycan. Residues 38-63 traverse the membrane as a helical segment; it reads VSVPDGLFLSLGLVSVVENVLVVAAI. Residues 64–72 lie on the Cytoplasmic side of the membrane; it reads AKNRNLHSP. The helical transmembrane segment at 73 to 93 threads the bilayer; sequence MYYFICCLAVSDLLVSVSSVL. At 94 to 118 the chain is on the extracellular side; it reads ETAVMLLLEAGTLAGRAAVVQQLDD. Residues 119–140 form a helical membrane-spanning segment; it reads IIDVLVCGAMVSSLCFLGAIAV. The Cytoplasmic segment spans residues 141 to 163; that stretch reads DRYISIFYALRYHSIVTLPRAWR. Residues 164-183 form a helical membrane-spanning segment; the sequence is AISAIWVASVLSSTLFIAYY. Over 184 to 191 the chain is Extracellular; that stretch reads DHTAVLLC. A helical membrane pass occupies residues 192–211; it reads LVSFFVAMLVLMAVLYVHML. Residues 212 to 240 lie on the Cytoplasmic side of the membrane; it reads ARACQHARGIARLHKRQRPVHQGLGLKGA. A helical membrane pass occupies residues 241–266; it reads ATLTILLGIFFLCWGPFFLHLSLMVL. Topologically, residues 267 to 279 are extracellular; it reads CPRHPICGCVFKN. Residues 280–300 form a helical membrane-spanning segment; the sequence is FNLFLTLIICNSIVDPLIYAF. The Cytoplasmic segment spans residues 301–317; sequence RSQELRKTLREVLLCSW. Residue cysteine 315 is the site of S-palmitoyl cysteine attachment.

Belongs to the G-protein coupled receptor 1 family. Interacts with MGRN1, but does not undergo MGRN1-mediated ubiquitination; this interaction competes with GNAS-binding and thus inhibits agonist-induced cAMP production. Interacts with OPN3; the interaction results in a decrease in MC1R-mediated cAMP signaling and ultimately a decrease in melanin production in melanocytes.

It localises to the cell membrane. In terms of biological role, receptor for MSH (alpha, beta and gamma) and ACTH. The activity of this receptor is mediated by G proteins which activate adenylate cyclase. Mediates melanogenesis, the production of eumelanin (black/brown) and phaeomelanin (red/yellow), via regulation of cAMP signaling in melanocytes. The polypeptide is Melanocyte-stimulating hormone receptor (MC1R) (Puma yagouaroundi (Jaguarundi)).